A 188-amino-acid chain; its full sequence is Elongation factor P (188 aa).

Lys-34 carries the N6-(3,6-diaminohexanoyl)-5-hydroxylysine modification.

This sequence belongs to the elongation factor P family. Post-translationally, may be beta-lysylated on the epsilon-amino group of Lys-34 by the combined action of EpmA and EpmB, and then hydroxylated on the C5 position of the same residue by EpmC (if this protein is present). Lysylation is critical for the stimulatory effect of EF-P on peptide-bond formation. The lysylation moiety may extend toward the peptidyltransferase center and stabilize the terminal 3-CCA end of the tRNA. Hydroxylation of the C5 position on Lys-34 may allow additional potential stabilizing hydrogen-bond interactions with the P-tRNA.

It is found in the cytoplasm. It participates in protein biosynthesis; polypeptide chain elongation. Functionally, involved in peptide bond synthesis. Alleviates ribosome stalling that occurs when 3 or more consecutive Pro residues or the sequence PPG is present in a protein, possibly by augmenting the peptidyl transferase activity of the ribosome. Modification of Lys-34 is required for alleviation. The polypeptide is Elongation factor P (Haemophilus influenzae (strain 86-028NP)).